A 484-amino-acid chain; its full sequence is Probable cytosol aminopeptidase (484 aa).

The Mn(2+) site is built by lysine 256 and aspartate 261. Residue lysine 268 is part of the active site. Mn(2+)-binding residues include aspartate 279, aspartate 338, and glutamate 340. Residue arginine 342 is part of the active site.

The protein belongs to the peptidase M17 family. The cofactor is Mn(2+).

Its subcellular location is the cytoplasm. The catalysed reaction is Release of an N-terminal amino acid, Xaa-|-Yaa-, in which Xaa is preferably Leu, but may be other amino acids including Pro although not Arg or Lys, and Yaa may be Pro. Amino acid amides and methyl esters are also readily hydrolyzed, but rates on arylamides are exceedingly low.. It carries out the reaction Release of an N-terminal amino acid, preferentially leucine, but not glutamic or aspartic acids.. Functionally, presumably involved in the processing and regular turnover of intracellular proteins. Catalyzes the removal of unsubstituted N-terminal amino acids from various peptides. The polypeptide is Probable cytosol aminopeptidase (Actinobacillus succinogenes (strain ATCC 55618 / DSM 22257 / CCUG 43843 / 130Z)).